The chain runs to 322 residues: Beta-carotene 3-hydroxylase, chloroplastic (322 aa).

Residues 1–68 constitute a chloroplast transit peptide; the sequence is TFHKPVSGAS…AQRCSLVRLR (68 aa). The next 2 helical transmembrane spans lie at 118–138 and 149–169; these read QAAAIAASIGVSGIAIFATYL and AVPWGEVAGTLLLVVGGALGM. Positions 164 to 286 constitute a Fatty acid hydroxylase domain; the sequence is GGALGMEMYA…AHQLHHSGKY (123 aa). The Histidine box-1 signature appears at 177-182; sequence HKAIWH. The short motif at 191-195 is the Histidine box-2 element; sequence HKSHH. Helical transmembrane passes span 207 to 227 and 231 to 251; these read LFAIINGLPAMLLCTFGFWLP and GAACFGAGLGITLYGMAYMFV. The Histidine box-3 signature appears at 252-257; it reads HDGLVH. Residues 278–282 carry the Histidine box-4 motif; sequence HQLHH.

Belongs to the sterol desaturase family.

It is found in the plastid. The protein resides in the chloroplast membrane. It catalyses the reaction all-trans-beta-carotene + 4 reduced [2Fe-2S]-[ferredoxin] + 2 O2 + 4 H(+) = all-trans-zeaxanthin + 4 oxidized [2Fe-2S]-[ferredoxin] + 2 H2O. Functionally, nonheme diiron monooxygenase involved in the biosynthesis of astaxanthin. Hydroxylates beta-ring of beta-carotene and catalyzes the conversion of canthaxanthin to astaxanthin. Uses ferredoxin as an electron donor. The protein is Beta-carotene 3-hydroxylase, chloroplastic (CRTZ) of Haematococcus lacustris (Green alga).